A 553-amino-acid polypeptide reads, in one-letter code: MGSRSSTRIPVPLMLIIRTALTLSCIRLTSSLDGRPLAAAGIVVTGDKAVNIYTSSQTGSIIVKLLPNMPKDKEVCAKAPLEAYNRTLTTLLTPLGDSIRRIQESVTTSGGRRQRRFIGAIIGSVALGVATAAQITAASALIQANQNAANILRLKESIAATNEAVHEVTDGLSQLAVAVGKMQQFVNDQFNNTAQELDCIKIAQQVGVELNLYLTELTTVFGPQITSPALTQLTIQALYNLAGGNMDYLLTKLGVGNNQLSSLIGSGLITGNPILYDSQTQILGIQVTLPSVGNLNNMRATYLETLSVSTTKGFASALVPKVVTQVGSVIEELDTSYCIGTDLDLYCTRIVTFPMSPGIYSCLSGNTSACMYSKTEGALTTPYMALKGSVIANCKLTTCRCADPPGIISQNYGEAVSLIDRHSCNVLSLDGITLRLSGEFDATYQKNISILDSQVIVTGNLDISTELGNVNNSISNALNKLEESNSKLDKVNVKLTSTSALITYIVLTVISLVFGVLSLVLACYLMYKQKAQQKTLLWLGNNTLDQMRATTKI.

An N-terminal signal peptide occupies residues 1 to 31; that stretch reads MGSRSSTRIPVPLMLIIRTALTLSCIRLTSS. Over 32 to 500 the chain is Extracellular; sequence LDGRPLAAAG…VNVKLTSTSA (469 aa). 3 disulfide bridges follow: Cys76/Cys199, Cys338/Cys347, and Cys362/Cys370. N-linked (GlcNAc...) asparagine; by host glycosylation occurs at Asn85. Positions 117 to 141 are fusion peptide; sequence FIGAIIGSVALGVATAAQITAASAL. Residues 142-170 adopt a coiled-coil conformation; it reads IQANQNAANILRLKESIAATNEAVHEVTD. An N-linked (GlcNAc...) asparagine; by host glycan is attached at Asn191. N-linked (GlcNAc...) asparagine; by host glycosylation is found at Asn366, Asn447, and Asn471. A coiled-coil region spans residues 466–491; sequence ELGNVNNSISNALNKLEESNSKLDKV. Residues 501–521 form a helical membrane-spanning segment; that stretch reads LITYIVLTVISLVFGVLSLVL. Residues 522-553 lie on the Cytoplasmic side of the membrane; that stretch reads ACYLMYKQKAQQKTLLWLGNNTLDQMRATTKI. Residue Cys523 is the site of S-palmitoyl cysteine; by host attachment.

Belongs to the paramyxoviruses fusion glycoprotein family. As to quaternary structure, homotrimer of disulfide-linked F1-F2. The inactive precursor F0 is glycosylated and proteolytically cleaved into F1 and F2 to be functionally active. The cleavage is mediated by cellular proteases during the transport and maturation of the polypeptide.

It localises to the virion membrane. The protein resides in the host cell membrane. Functionally, class I viral fusion protein. Under the current model, the protein has at least 3 conformational states: pre-fusion native state, pre-hairpin intermediate state, and post-fusion hairpin state. During viral and plasma cell membrane fusion, the heptad repeat (HR) regions assume a trimer-of-hairpins structure, positioning the fusion peptide in close proximity to the C-terminal region of the ectodomain. The formation of this structure appears to drive apposition and subsequent fusion of viral and plasma cell membranes. Directs fusion of viral and cellular membranes leading to delivery of the nucleocapsid into the cytoplasm. This fusion is pH independent and occurs directly at the outer cell membrane. The trimer of F1-F2 (F protein) probably interacts with HN at the virion surface. Upon HN binding to its cellular receptor, the hydrophobic fusion peptide is unmasked and interacts with the cellular membrane, inducing the fusion between cell and virion membranes. Later in infection, F proteins expressed at the plasma membrane of infected cells could mediate fusion with adjacent cells to form syncytia, a cytopathic effect that could lead to tissue necrosis. The protein is Fusion glycoprotein F0 (F) of Gallus gallus (Chicken).